The sequence spans 255 residues: 4-hydroxy-tetrahydrodipicolinate reductase (255 aa).

NAD(+)-binding positions include 8 to 13 (GANGRV), 88 to 90 (GTT), and 112 to 115 (ATNM). Residue H144 is the Proton donor/acceptor of the active site. H145 is a binding site for (S)-2,3,4,5-tetrahydrodipicolinate. Residue K148 is the Proton donor of the active site. 154–155 (GT) contacts (S)-2,3,4,5-tetrahydrodipicolinate.

The protein belongs to the DapB family.

Its subcellular location is the cytoplasm. It catalyses the reaction (S)-2,3,4,5-tetrahydrodipicolinate + NAD(+) + H2O = (2S,4S)-4-hydroxy-2,3,4,5-tetrahydrodipicolinate + NADH + H(+). The catalysed reaction is (S)-2,3,4,5-tetrahydrodipicolinate + NADP(+) + H2O = (2S,4S)-4-hydroxy-2,3,4,5-tetrahydrodipicolinate + NADPH + H(+). It functions in the pathway amino-acid biosynthesis; L-lysine biosynthesis via DAP pathway; (S)-tetrahydrodipicolinate from L-aspartate: step 4/4. Functionally, catalyzes the conversion of 4-hydroxy-tetrahydrodipicolinate (HTPA) to tetrahydrodipicolinate. The chain is 4-hydroxy-tetrahydrodipicolinate reductase from Sulfurimonas denitrificans (strain ATCC 33889 / DSM 1251) (Thiomicrospira denitrificans (strain ATCC 33889 / DSM 1251)).